Here is a 188-residue protein sequence, read N- to C-terminus: MLCENCQLNEAELKVKVTSKNKTEEKMVCQTCAEGHHPWNQANEQPEYQEHQDNFEEAFVVKQILQHLATKHGINFQEVAFKEEKRCPSCHMTLKDIAHVGKFGCANCYATFKDDIIDIVRRVQGGQFEHVGKTPHSSHKKIALKRKIEEKNEYLKKLIEIQDFEEAAIVRDEIKALKAESEVQHDDA.

4 consecutive short sequence motifs (CXXC metal binding motif) follow at residues 3–6, 29–32, 87–90, and 105–108; these read CENC, CQTC, CPSC, and CANC. One can recognise a UVR domain in the interval 145-180; that stretch reads KRKIEEKNEYLKKLIEIQDFEEAAIVRDEIKALKAE.

Interacts with McsB and CtsR; the CXXC motifs are needed for the binding.

Activates the phosphorylation activity of the protein-arginine kinase McsB. May function as an important molecule for oxidative tolerance in various types of stress including that of heavy metals. Binds to Cu(2+), Zn(2+), Co(2+) and Cd(2+) via its CXXC metal binding motifs. This chain is Protein-arginine kinase activator protein, found in Staphylococcus aureus (strain NCTC 8325 / PS 47).